We begin with the raw amino-acid sequence, 230 residues long: Ureidoacrylate amidohydrolase RutB (230 aa).

The Proton acceptor role is filled by aspartate 24. The active site involves lysine 133. Catalysis depends on cysteine 166, which acts as the Nucleophile.

This sequence belongs to the isochorismatase family. RutB subfamily.

The enzyme catalyses (Z)-3-ureidoacrylate + H2O + H(+) = (Z)-3-aminoacrylate + NH4(+) + CO2. It carries out the reaction (Z)-3-ureidoacrylate + H2O = (Z)-3-aminoacrylate + carbamate + H(+). It catalyses the reaction (Z)-2-methylureidoacrylate + H2O + H(+) = (Z)-2-methylaminoacrylate + NH4(+) + CO2. Its function is as follows. Hydrolyzes ureidoacrylate to form aminoacrylate and carbamate. The carbamate hydrolyzes spontaneously, thereby releasing one of the nitrogen atoms of the pyrimidine ring as ammonia and one of its carbon atoms as CO2. The protein is Ureidoacrylate amidohydrolase RutB of Escherichia coli O44:H18 (strain 042 / EAEC).